A 187-amino-acid polypeptide reads, in one-letter code: Large ribosomal subunit protein bL12cx (187 aa).

Residues 1–54 constitute a chloroplast transit peptide; that stretch reads MASTTLSIATTIRSSSPLTSASTHHFLSKPTAIEFPFRLSSSSSHRAINLRPIS.

It belongs to the bacterial ribosomal protein bL12 family.

It localises to the plastid. It is found in the chloroplast. The protein is Large ribosomal subunit protein bL12cx (RPL12C) of Arabidopsis thaliana (Mouse-ear cress).